The sequence spans 119 residues: Small ribosomal subunit protein bS6 (119 aa).

Residues 99–119 (KKEKKQSRKEEGSENSEKVEE) form a disordered region.

This sequence belongs to the bacterial ribosomal protein bS6 family.

Functionally, binds together with bS18 to 16S ribosomal RNA. The polypeptide is Small ribosomal subunit protein bS6 (Thermosipho melanesiensis (strain DSM 12029 / CIP 104789 / BI429)).